A 592-amino-acid chain; its full sequence is Transcription factor MYC3 (592 aa).

Residues 82-141 (STGDNTVILGWGDGYYKGEEDKEKKKNNTNTAEQEHRKRVIRELNSLISGGIGVSDESND) are JAZ-interaction domain. 4 disordered regions span residues 261–313 (ENDP…VENQ), 341–361 (CGNESSKKRTSVSKGSNNDEG), 393–422 (EPPEKKPRKRGRKPANGREEPLNHVEAERQ), and 465–508 (QQAE…STAS). Low complexity predominate over residues 278–293 (SPARVNNGNNSNSNSK). The span at 294–306 (SDSHQISKLEKND) shows a compositional bias: basic and acidic residues. Over residues 352-361 (VSKGSNNDEG) the composition is skewed to polar residues. The span at 398-407 (KPRKRGRKPA) shows a compositional bias: basic residues. 2 stretches are compositionally biased toward basic and acidic residues: residues 408–422 (NGREEPLNHVEAERQ) and 468–482 (ESDKEEIQKKLDGMS). Residues 411-460 (EEPLNHVEAERQRREKLNQRFYSLRAVVPNVSKMDKASLLGDAISYINEL) form the bHLH domain.

Homo- and heterodimer. Interacts with MYB28, MYB29, MYB34, MYB51, MYB76, MYB122, MYC2, MYC4, AFPH2/NINJA and the JAZ repressors TIFY10A/JAZ1, TIFY10B/JAZ2, TIFY6B/JAZ3, TIFY11A/JAZ5, TIFY11B/JAZ6, TIFY5B/JAZ7, TIFY5A/JAZ8, TIFY7/JAZ9, TIFY9/JAZ10, TIFY3A/JAZ11 and TIFY3B/JAZ12. As to expression, constitutively expressed in roots, stems, leaves, flowers, and seedlings.

The protein localises to the nucleus. Transcription factor involved in tryptophan, jasmonic acid (JA) and other stress-responsive gene regulation. With MYC2 and MYC4, controls additively subsets of JA-dependent responses. Can form complexes with all known glucosinolate-related MYBs to regulate glucosinolate biosynthesis. Binds to the G-box (5'-CACGTG-3') of promoters. Activates multiple TIFY/JAZ promoters. The chain is Transcription factor MYC3 (MYC3) from Arabidopsis thaliana (Mouse-ear cress).